The following is a 324-amino-acid chain: Calpain-2 catalytic subunit (324 aa).

Residues 1–138 form a domain III region; sequence YPNTFWMNPQ…KKADYQVVDD (138 aa). The linker stretch occupies residues 139–153; it reads EIEADLEENDASEDD. A domain IV region spans residues 158–324; sequence FRRLFAQLAG…LISWLCFSVL (167 aa). Residues alanine 166, aspartate 169, glutamate 171, glutamate 176, aspartate 209, aspartate 211, serine 213, lysine 215, glutamate 220, aspartate 239, aspartate 241, serine 243, threonine 245, glutamate 250, aspartate 282, and asparagine 285 each coordinate Ca(2+). EF-hand domains are found at residues 190–224 and 226–261; these read DIKS…FYIL and TKIQ…AGFK.

This sequence belongs to the peptidase C2 family. As to quaternary structure, forms a heterodimer with a small (regulatory) subunit (CAPNS1). Interacts with CPEB3; this leads to cleavage of CPEB3. It depends on Ca(2+) as a cofactor. Ubiquitous.

The protein localises to the cytoplasm. Its subcellular location is the cell membrane. It carries out the reaction Broad endopeptidase specificity.. With respect to regulation, activated by 200-1000 micromolar concentrations of calcium and inhibited by calpastatin. In terms of biological role, calcium-regulated non-lysosomal thiol-protease which catalyzes limited proteolysis of substrates involved in cytoskeletal remodeling and signal transduction. Proteolytically cleaves MYOC at 'Arg-226'. Proteolytically cleaves CPEB3 following neuronal stimulation which abolishes CPEB3 translational repressor activity, leading to translation of CPEB3 target mRNAs. The chain is Calpain-2 catalytic subunit (CAPN2) from Sus scrofa (Pig).